The following is a 326-amino-acid chain: 3-isopropylmalate dehydrogenase (326 aa).

Substrate contacts are provided by arginine 81, arginine 91, arginine 112, and aspartate 198. Residues aspartate 198, aspartate 222, and aspartate 226 each contribute to the Mg(2+) site. 255 to 267 serves as a coordination point for NAD(+); sequence GAAFDIAGKGIAN.

It belongs to the isocitrate and isopropylmalate dehydrogenases family. In terms of assembly, homotetramer. Mg(2+) serves as cofactor. Requires Mn(2+) as cofactor.

The protein localises to the cytoplasm. The enzyme catalyses (2R,3S)-3-isopropylmalate + NAD(+) = 4-methyl-2-oxopentanoate + CO2 + NADH. Its pathway is amino-acid biosynthesis; L-leucine biosynthesis; L-leucine from 3-methyl-2-oxobutanoate: step 3/4. Catalyzes the oxidation of 3-carboxy-2-hydroxy-4-methylpentanoate (3-isopropylmalate) to 3-carboxy-4-methyl-2-oxopentanoate. The product decarboxylates to 4-methyl-2 oxopentanoate. The chain is 3-isopropylmalate dehydrogenase (leuB) from Archaeoglobus fulgidus (strain ATCC 49558 / DSM 4304 / JCM 9628 / NBRC 100126 / VC-16).